Consider the following 156-residue polypeptide: Ribonuclease 7 (156 aa).

An N-terminal signal peptide occupies residues 1–28 (MAPARAGFCPLLLLLLLGLWVAEIPVSA). The interval 29-32 (KPKG) is important for antibacterial activity. The Proton acceptor role is filled by His-43. DUMP contacts are provided by His-43, Lys-66, Asn-69, and Thr-70. 4 disulfide bridges follow: Cys-51–Cys-109, Cys-65–Cys-119, Cys-83–Cys-134, and Cys-90–Cys-97. A glycan (N-linked (GlcNAc...) asparagine) is linked at Asn-127. Residues 139-140 (KK) are important for antibacterial activity. DUMP-binding residues include His-151 and Arg-154. His-151 serves as the catalytic Proton donor.

In terms of tissue distribution, expressed in collecting ducts in kidney, and in apical uroepithelium in bladder (at protein level). Expressed in various epithelial tissues including skin, respiratory tract, genito-urinary tract and, at a low level, in the gut. Expressed in liver, kidney, skeletal muscle and heart.

It is found in the secreted. Functionally, exhibits a potent RNase activity. Has broad-spectrum antimicrobial activity against many pathogenic microorganisms including uropathogenic E.coli (UPEC), and remarkably potent activity (lethal dose of 90% &lt; 30 nM) against a vancomycin resistant Enterococcus faecium. Causes loss of bacterial membrane integrity. Probably contributes to urinary tract sterility. Bactericidal activity is independent of RNase activity. The polypeptide is Ribonuclease 7 (RNASE7) (Homo sapiens (Human)).